A 99-amino-acid polypeptide reads, in one-letter code: Class II hydrophobin 3 (99 aa).

An N-terminal signal peptide occupies residues 1-18 (MRIDILATAALLAQLASA). Cystine bridges form between Cys31–Cys79, Cys40–Cys70, and Cys41–Cys53.

The protein belongs to the cerato-ulmin hydrophobin family. In terms of assembly, homodimer. Homodimers further self-assemble to form highly ordered films at water-air interfaces through intermolecular interactions.

The protein localises to the secreted. The protein resides in the cell wall. In terms of biological role, aerial growth, conidiation, and dispersal of filamentous fungi in the environment rely upon a capability of their secreting small amphipathic proteins called hydrophobins (HPBs) with low sequence identity. Class I can self-assemble into an outermost layer of rodlet bundles on aerial cell surfaces, conferring cellular hydrophobicity that supports fungal growth, development and dispersal; whereas Class II form highly ordered films at water-air interfaces through intermolecular interactions but contribute nothing to the rodlet structure. Hyd3 is a class II hydrophobin required for barley root colonization. Hyd1 and Hyd3 are jointly required for conidial hydrophobicity and dispersal, but seem not to be involved in mycelia hydrophobicity. Inhibits conidial germination in environments not suitable for mycelial growth. Plays probably a role in intraspecific signaling or hyphal fusion. This is Class II hydrophobin 3 from Bionectria ochroleuca (Gliocladium roseum).